A 350-amino-acid polypeptide reads, in one-letter code: Holliday junction branch migration complex subunit RuvB (350 aa).

The tract at residues 1–22 (MDHTASLSPVRPEAQPTDDRER) is disordered. The tract at residues 1–185 (MDHTASLSPV…FGIVERFEFY (185 aa)) is large ATPase domain (RuvB-L). ATP contacts are provided by residues Leu24, Arg25, Gly66, Lys69, Thr70, Thr71, 132 to 134 (EDY), Arg175, Tyr185, and Arg222. Thr70 contributes to the Mg(2+) binding site. The segment at 186–256 (TPEELAAIVQ…IVRAGLAHLK (71 aa)) is small ATPAse domain (RuvB-S). Positions 259–350 (ELGLELHDIQ…PHSPEQGTLL (92 aa)) are head domain (RuvB-H). Arg314 and Arg319 together coordinate DNA.

This sequence belongs to the RuvB family. Homohexamer. Forms an RuvA(8)-RuvB(12)-Holliday junction (HJ) complex. HJ DNA is sandwiched between 2 RuvA tetramers; dsDNA enters through RuvA and exits via RuvB. An RuvB hexamer assembles on each DNA strand where it exits the tetramer. Each RuvB hexamer is contacted by two RuvA subunits (via domain III) on 2 adjacent RuvB subunits; this complex drives branch migration. In the full resolvosome a probable DNA-RuvA(4)-RuvB(12)-RuvC(2) complex forms which resolves the HJ.

Its subcellular location is the cytoplasm. It catalyses the reaction ATP + H2O = ADP + phosphate + H(+). Functionally, the RuvA-RuvB-RuvC complex processes Holliday junction (HJ) DNA during genetic recombination and DNA repair, while the RuvA-RuvB complex plays an important role in the rescue of blocked DNA replication forks via replication fork reversal (RFR). RuvA specifically binds to HJ cruciform DNA, conferring on it an open structure. The RuvB hexamer acts as an ATP-dependent pump, pulling dsDNA into and through the RuvAB complex. RuvB forms 2 homohexamers on either side of HJ DNA bound by 1 or 2 RuvA tetramers; 4 subunits per hexamer contact DNA at a time. Coordinated motions by a converter formed by DNA-disengaged RuvB subunits stimulates ATP hydrolysis and nucleotide exchange. Immobilization of the converter enables RuvB to convert the ATP-contained energy into a lever motion, pulling 2 nucleotides of DNA out of the RuvA tetramer per ATP hydrolyzed, thus driving DNA branch migration. The RuvB motors rotate together with the DNA substrate, which together with the progressing nucleotide cycle form the mechanistic basis for DNA recombination by continuous HJ branch migration. Branch migration allows RuvC to scan DNA until it finds its consensus sequence, where it cleaves and resolves cruciform DNA. The polypeptide is Holliday junction branch migration complex subunit RuvB (Treponema pallidum (strain Nichols)).